Consider the following 474-residue polypeptide: Ribulose bisphosphate carboxylase large chain (474 aa).

Substrate-binding residues include asparagine 117 and threonine 167. The Proton acceptor role is filled by lysine 169. Lysine 171 lines the substrate pocket. Residues lysine 195, aspartate 197, and glutamate 198 each contribute to the Mg(2+) site. At lysine 195 the chain carries N6-carboxylysine. The active-site Proton acceptor is the histidine 288. Substrate contacts are provided by arginine 289, histidine 321, and serine 373.

Belongs to the RuBisCO large chain family. Type I subfamily. Heterohexadecamer of 8 large chains and 8 small chains. The cofactor is Mg(2+).

It catalyses the reaction 2 (2R)-3-phosphoglycerate + 2 H(+) = D-ribulose 1,5-bisphosphate + CO2 + H2O. It carries out the reaction D-ribulose 1,5-bisphosphate + O2 = 2-phosphoglycolate + (2R)-3-phosphoglycerate + 2 H(+). Functionally, ruBisCO catalyzes two reactions: the carboxylation of D-ribulose 1,5-bisphosphate, the primary event in carbon dioxide fixation, as well as the oxidative fragmentation of the pentose substrate. Both reactions occur simultaneously and in competition at the same active site. The sequence is that of Ribulose bisphosphate carboxylase large chain from Hydrogenophilus thermoluteolus (Pseudomonas hydrogenothermophila).